The chain runs to 492 residues: MSYMERESWSSNLGFILASVGSAIGLGNIWRFGYMVYTNGGGAFLIPYIVALLCVGIPLMILEFAIGHYTKKSAPLALEKLHKGSEWTGWFAVISGFIITSYYVVIIAWCLYYLIILVIYGYPSDPNAYFFHNILQISSGVEDIGGVSYGILVSTLAVWGIVALILSAGIKNGLEKANKIMIPFLLFLIILLVLNALTLPGALTGIEWYLTPDFSALFNYNVWLSAFSQIFFSLSLGFGILIAYASYLPKKSDLTINAVTVSLLNCGFSFLAGFAVFGTLGYMSYTSGIPLDKAVSEGIGLAFVTFPKALSLLPFASRLFGIVFFLALVFAGISSAVSIVEASVSAIIDKFSLSRKKALLAVLALFIIISPIFTTGAGLYYLDIIDHFASGYLLPIAAILEIIIAIWLFGGDKLREHVNKLSEIKLGVWWKYLAGVVSPIILTAVVFLDASNVLTSGYGGYKTTYVIFGALIIPLAFVVSVILQKMKTIKGW.

12 helical membrane-spanning segments follow: residues 13 to 33 (LGFI…WRFG), 42 to 62 (GAFL…LMIL), 97 to 117 (FIIT…LIIL), 150 to 170 (GILV…SAGI), 180 to 200 (IMIP…LTLP), 222 to 242 (VWLS…GILI), 258 to 278 (AVTV…AVFG), 320 to 340 (FGIV…VSIV), 359 to 379 (LLAV…GAGL), 391 to 411 (GYLL…LFGG), 428 to 448 (VWWK…VVFL), and 463 to 483 (TTYV…SVIL).

The protein belongs to the sodium:neurotransmitter symporter (SNF) (TC 2.A.22) family.

The protein resides in the cell membrane. In terms of biological role, putative sodium-dependent transporter. This is an uncharacterized protein from Methanocaldococcus jannaschii (strain ATCC 43067 / DSM 2661 / JAL-1 / JCM 10045 / NBRC 100440) (Methanococcus jannaschii).